The sequence spans 300 residues: Vetispiradiene synthase 2 (300 aa).

Residues D54, D58, D197, T201, and E205 each contribute to the Mg(2+) site. A DDXXD motif motif is present at residues 54–58 (DDTFD).

The protein belongs to the terpene synthase family. Tpsa subfamily. It depends on Mg(2+) as a cofactor.

It localises to the cytoplasm. The enzyme catalyses (2E,6E)-farnesyl diphosphate = (-)-vetispiradiene + diphosphate. The protein operates within secondary metabolite biosynthesis; terpenoid biosynthesis. Its function is as follows. Sesquiterpene synthase that catalyzes the formation of vetispiradiene from trans,trans-farnesyl diphosphate. The initial internal cyclization produces the monocyclic intermediate germacrene A. In Hyoscyamus muticus (Egyptian henbane), this protein is Vetispiradiene synthase 2.